Consider the following 348-residue polypeptide: Uroporphyrinogen decarboxylase (348 aa).

Residues 27-31, phenylalanine 46, aspartate 76, tyrosine 152, serine 207, and histidine 320 contribute to the substrate site; that span reads RQAGR.

This sequence belongs to the uroporphyrinogen decarboxylase family. As to quaternary structure, homodimer.

It localises to the cytoplasm. The catalysed reaction is uroporphyrinogen III + 4 H(+) = coproporphyrinogen III + 4 CO2. It participates in porphyrin-containing compound metabolism; protoporphyrin-IX biosynthesis; coproporphyrinogen-III from 5-aminolevulinate: step 4/4. Catalyzes the decarboxylation of four acetate groups of uroporphyrinogen-III to yield coproporphyrinogen-III. The chain is Uroporphyrinogen decarboxylase from Bacillus thuringiensis (strain Al Hakam).